Consider the following 143-residue polypeptide: Nucleoside diphosphate kinase (143 aa).

Positions 11, 59, 87, 93, 104, and 114 each coordinate ATP. Histidine 117 functions as the Pros-phosphohistidine intermediate in the catalytic mechanism.

Belongs to the NDK family. As to quaternary structure, homotetramer. Mg(2+) is required as a cofactor.

It localises to the cytoplasm. The enzyme catalyses a 2'-deoxyribonucleoside 5'-diphosphate + ATP = a 2'-deoxyribonucleoside 5'-triphosphate + ADP. It catalyses the reaction a ribonucleoside 5'-diphosphate + ATP = a ribonucleoside 5'-triphosphate + ADP. Its function is as follows. Major role in the synthesis of nucleoside triphosphates other than ATP. The ATP gamma phosphate is transferred to the NDP beta phosphate via a ping-pong mechanism, using a phosphorylated active-site intermediate. In Acinetobacter baylyi (strain ATCC 33305 / BD413 / ADP1), this protein is Nucleoside diphosphate kinase.